The sequence spans 196 residues: MVKIGVLGLQGAVREHVKSVEASGAEAVVVKRIEQLEEIDGLILPGGESTTMRRLIDKYDFMEPLRTFAKSGKPMFGTCAGMILLAKTLIGYDEAHIGAMDITVERNAFGRQKDSFEAALSIKGVGEDFVGVFIRAPYVVDVADDVEVLSTHGDRMVAVKQGPFLAASFHPELTDDHRVTAYFVEMVKEAKMKKVV.

47–49 is an L-glutamine binding site; it reads GES. Catalysis depends on Cys79, which acts as the Nucleophile. L-glutamine contacts are provided by residues Arg106 and 134–135; that span reads IR. Catalysis depends on charge relay system residues His170 and Glu172.

It belongs to the glutaminase PdxT/SNO family. As to quaternary structure, in the presence of PdxS, forms a dodecamer of heterodimers. Only shows activity in the heterodimer.

The catalysed reaction is aldehydo-D-ribose 5-phosphate + D-glyceraldehyde 3-phosphate + L-glutamine = pyridoxal 5'-phosphate + L-glutamate + phosphate + 3 H2O + H(+). The enzyme catalyses L-glutamine + H2O = L-glutamate + NH4(+). It functions in the pathway cofactor biosynthesis; pyridoxal 5'-phosphate biosynthesis. In terms of biological role, catalyzes the hydrolysis of glutamine to glutamate and ammonia as part of the biosynthesis of pyridoxal 5'-phosphate. The resulting ammonia molecule is channeled to the active site of PdxS. The protein is Pyridoxal 5'-phosphate synthase subunit PdxT of Bacillus anthracis (strain A0248).